Here is a 1486-residue protein sequence, read N- to C-terminus: Chromosome partition protein MukB (1486 aa).

Gly34 to Ser41 contributes to the ATP binding site. 3 coiled-coil regions span residues Leu326–Gln418, Leu444–Gln480, and Arg509–Val603. Residues Pro666–Arg783 form a flexible hinge region. Coiled-coil stretches lie at residues Glu835 to Glu923, Glu977 to Ala1115, and Val1209 to Ser1266.

It belongs to the SMC family. MukB subfamily. As to quaternary structure, homodimerization via its hinge domain. Binds to DNA via its C-terminal region. Interacts, and probably forms a ternary complex, with MukE and MukF via its C-terminal region. The complex formation is stimulated by calcium or magnesium. Interacts with tubulin-related protein FtsZ.

The protein localises to the cytoplasm. Its subcellular location is the nucleoid. Its function is as follows. Plays a central role in chromosome condensation, segregation and cell cycle progression. Functions as a homodimer, which is essential for chromosome partition. Involved in negative DNA supercoiling in vivo, and by this means organize and compact chromosomes. May achieve or facilitate chromosome segregation by condensation DNA from both sides of a centrally located replisome during cell division. In Escherichia coli O17:K52:H18 (strain UMN026 / ExPEC), this protein is Chromosome partition protein MukB.